The primary structure comprises 131 residues: Interleukin-13 (131 aa).

The N-terminal stretch at 1-18 is a signal peptide; the sequence is MALWVTAVLALACLGGLA. 4 N-linked (GlcNAc...) asparagine glycosylation sites follow: Asn-42, Asn-53, Asn-76, and Asn-121. 2 disulfide bridges follow: Cys-52–Cys-80 and Cys-68–Cys-94.

It belongs to the IL-4/IL-13 family. In terms of assembly, interacts with IL13RA2.

Its subcellular location is the secreted. Its function is as follows. Cytokine that plays important roles in allergic inflammation and immune response to parasite infection. Synergizes with IL2 in regulating interferon-gamma synthesis. Stimulates B-cell proliferation, and activation of eosinophils, basophils, and mast cells. Plays an important role in controlling IL33 activity by modulating the production of transmembrane and soluble forms of interleukin-1 receptor-like 1/IL1RL1. Displays the capacity to antagonize Th1-driven proinflammatory immune response and downregulates synthesis of many proinflammatory cytokines including IL1, IL6, IL10, IL12 and TNF-alpha through a mechanism that partially involves suppression of NF-kappa-B. Also functions on nonhematopoietic cells, including endothelial cells where it induces vascular cell adhesion protein 1/VCAM1, which is important in the recruitment of eosinophils. Exerts its biological effects through its receptors which comprises the IL4R chain and the IL13RA1 chain, to activate JAK1 and TYK2, leading to the activation of STAT6. Aside from IL13RA1, another receptor IL13RA2 acts as a high affinity decoy for IL13 and mediates internalization and depletion of extracellular IL13. The polypeptide is Interleukin-13 (Il13) (Rattus norvegicus (Rat)).